We begin with the raw amino-acid sequence, 522 residues long: Protein RCC2 (522 aa).

A disordered region spans residues 1 to 83 (MPRKKAAAAA…TAGKAGGAAV (83 aa)). At Ser-16 the chain carries Phosphoserine. The residue at position 20 (Thr-20) is a Phosphothreonine. Basic residues predominate over residues 24–36 (GPRKRGGPAGRKR). Phosphoserine is present on residues Ser-43, Ser-44, Ser-45, Ser-46, Ser-50, and Ser-51. Residues 71-82 (RPATAGKAGGAA) are compositionally biased toward low complexity. Residues Lys-92 and Lys-124 each carry the N6-acetyllysine modification. 7 RCC1 repeats span residues 103-165 (KGQL…SLLI), 168-219 (EGKL…ALTE), 221-271 (GSVF…IMDC), 273-347 (GNLY…VLDS), 348-401 (QKRV…AVSE), 403-447 (GGLF…VAAD), and 448-501 (ESTI…VIAR). Position 293 is an N6-acetyllysine (Lys-293). Positions 318–325 (KTKDGQIL) are required for interaction with RAC1. Thr-342 is subject to Phosphothreonine. The residue at position 377 (Lys-377) is an N6-acetyllysine. Residues 502 to 515 (DESETEKEKIKKLP) show a composition bias toward basic and acidic residues. A disordered region spans residues 502–522 (DESETEKEKIKKLPEYNPRTL).

Interacts with RAC1. Interacts with nucleotide-free and with GDP and GTP-bound forms of RAC1, with a slight preference for GDP-bound RAC1. Binds preferentially to the nucleotide-free form of RAC1. Interacts with CORO1C. Interacts with microtubules.

Its subcellular location is the nucleus. The protein localises to the nucleolus. It localises to the cytoplasm. The protein resides in the cytoskeleton. It is found in the chromosome. Its subcellular location is the centromere. The protein localises to the spindle. It localises to the midbody. The protein resides in the cell membrane. Multifunctional protein that may affect its functions by regulating the activity of small GTPases, such as RAC1 and RALA. Required for normal progress through the cell cycle, both during interphase and during mitosis. Required for the presence of normal levels of MAD2L1, AURKB and BIRC5 on inner centromeres during mitosis, and for normal attachment of kinetochores to mitotic spindles. Required for normal organization of the microtubule cytoskeleton in interphase cells. Functions as guanine nucleotide exchange factor (GEF) for RALA. Interferes with the activation of RAC1 by guanine nucleotide exchange factors. Prevents accumulation of active, GTP-bound RAC1, and suppresses RAC1-mediated reorganization of the actin cytoskeleton and formation of membrane protrusions. Required for normal cellular responses to contacts with the extracellular matrix of adjacent cells, and for directional cell migration in response to a fibronectin gradient (in vitro). The sequence is that of Protein RCC2 (RCC2) from Homo sapiens (Human).